We begin with the raw amino-acid sequence, 411 residues long: MQRLAMDLRVLSRELALYLEHQVRVGFFGSGVGLSLILGFSVAYACYYLSSIAKKPQLVIGGESFSRFLQDHCPVVTETYYPTVWCWESRGQTLLRPFITSKPPVQYRNELIKTADGGQISLDWFDNNNSAYYVDASTRPTILLLPGLTGTSKESYILHMIHLSEELGYRCVVFNNRGVAGESLLTPRTYCCANTEDLEAVVHHVHSLYPGAPFLAAGVSMGGMLLLNYLGKIGSKTPLMAAATFSVGWNTFACSESLERPLNWLLFNYYLTTCLQSSVKKHRHMFVEQIDMDQVMKAKSIREFDKRFTAVMFGYRTLDDYYTDASPNRRLKSVGIPVLCLNATDDVFSPSHAIPIETAKQNPNVALVLTAYGGHIGFLEGIWPRQCTYMDRVFKQFVQAMVEHGHELSNM.

The chain crosses the membrane as a helical; Signal-anchor for type II membrane protein span at residues 25 to 45 (VGFFGSGVGLSLILGFSVAYA). Residues 140-233 (PTILLLPGLT…MLLLNYLGKI (94 aa)) form the AB hydrolase-1 domain. Active-site charge relay system residues include serine 220, aspartate 346, and histidine 375.

The protein belongs to the AB hydrolase superfamily. AB hydrolase 4 family. As to expression, widely expressed with higher expression in liver.

The protein resides in the membrane. It catalyses the reaction a 1,2-diacyl-sn-glycero-3-phosphocholine + H2O = a 1-acyl-sn-glycero-3-phosphocholine + a fatty acid + H(+). The enzyme catalyses a 1,2-diacyl-sn-glycero-3-phosphocholine + H2O = a 2-acyl-sn-glycero-3-phosphocholine + a fatty acid + H(+). The catalysed reaction is 1-tetradecanoyl-2-(9Z,12Z-octadecadienoyl)-sn-glycero-3-phosphocholine + H2O = 2-(9Z,12Z-octadecadienoyl)-sn-glycero-3-phosphocholine + tetradecanoate + H(+). It carries out the reaction 1-tetradecanoyl-2-(9Z,12Z-octadecadienoyl)-sn-glycero-3-phosphocholine + H2O = 1-tetradecanoyl-sn-glycero-3-phosphocholine + (9Z,12Z)-octadecadienoate + H(+). It catalyses the reaction 1-tetradecanoyl-2-(5Z,8Z,11Z,14Z-eicosatetraenoyl)-sn-glycero-3-phosphocholine + H2O = 2-(5Z,8Z,11Z,14Z)-eicosatetraenoyl-sn-glycero-3-phosphocholine + tetradecanoate + H(+). The enzyme catalyses 1-tetradecanoyl-2-(4Z,7Z,10Z,13Z,16Z,19Z-docosahexaenoyl)-sn-glycero-3-phosphocholine + H2O = 2-(4Z,7Z,10Z,13Z,16Z,19Z-docosahexaenoyl)-sn-glycero-3-phosphocholine + tetradecanoate + H(+). The catalysed reaction is 1,2-ditetradecanoyl-sn-glycero-3-phosphocholine + H2O = 2-tetradecanoyl-sn-glycero-3-phosphocholine + tetradecanoate + H(+). It carries out the reaction 1-octadecanoyl-2-acetyl-sn-glycero-3-phosphocholine + H2O = 1-octadecanoyl-sn-glycero-3-phosphocholine + acetate + H(+). It catalyses the reaction 1,2-ditetradecanoyl-sn-glycero-3-phosphocholine + H2O = 1-tetradecanoyl-sn-glycero-3-phosphocholine + tetradecanoate + H(+). The enzyme catalyses 1-octadecanoyl-2-pentanoyl-sn-glycero-3-phosphocholine + H2O = pentanoate + 1-octadecanoyl-sn-glycero-3-phosphocholine + H(+). The catalysed reaction is 1-octadecanoyl-2-hexanoyl-sn-glycero-3-phosphocholine + H2O = hexanoate + 1-octadecanoyl-sn-glycero-3-phosphocholine + H(+). It carries out the reaction 1-octadecanoyl-2-octanoyl-sn-glycero-3-phosphocholine + H2O = 1-octadecanoyl-sn-glycero-3-phosphocholine + octanoate + H(+). It catalyses the reaction 1-octadecanoyl-2-nonanoyl-sn-glycero-3-phosphocholine + H2O = nonanoate + 1-octadecanoyl-sn-glycero-3-phosphocholine + H(+). The enzyme catalyses 1-O-hexadecyl-2-nonadioyl-sn-glycero-3-phosphocholine + H2O = nonanedioate + 1-O-hexadecyl-sn-glycero-3-phosphocholine + H(+). The catalysed reaction is 1-hexadecanoyl-2-nonadioyl-sn-glycero-3-phosphocholine + H2O = nonanedioate + 1-hexadecanoyl-sn-glycero-3-phosphocholine + H(+). It carries out the reaction 1-hexadecanoyl-2-(9-oxononanoyl)-sn-glycero-3-phosphocholine + H2O = 9-oxononanoate + 1-hexadecanoyl-sn-glycero-3-phosphocholine + H(+). It catalyses the reaction 1-hexadecanoyl-2-(5-oxopentanoyl)-sn-glycero-3-phosphocholine + H2O = 5-oxopentanoate + 1-hexadecanoyl-sn-glycero-3-phosphocholine + H(+). The enzyme catalyses 1-hexadecanoyl-2-glutaroyl-sn-glycero-3-phosphocholine + H2O = glutarate + 1-hexadecanoyl-sn-glycero-3-phosphocholine + H(+). The catalysed reaction is 1-O-hexadecyl-2-acetyl-sn-glycero-3-phosphocholine + H2O = 1-O-hexadecyl-sn-glycero-3-phosphocholine + acetate + H(+). In terms of biological role, phospholipase that may play a role in phospholipids remodeling. May selectively cleave myristate (C14)-containing phosphatidylcholines through its predominant phospholipase 1 activity, cleaving preferentially acyl groups in sn1 position. In parallel, may have a minor phospholipase 2 activity acting on acyl groups in position sn2. In addition to (C14)-containing phosphatidylcholines, may also act on other medium-chain-containing and oxidatively truncated phospholipids. The protein is Phospholipase ABHD3 of Mus musculus (Mouse).